A 1143-amino-acid polypeptide reads, in one-letter code: AP-3 complex subunit delta (1143 aa).

8 HEAT repeats span residues 129–166 (DLAR…RYPE), 167–203 (SLRP…RNPK), 205–242 (YLPL…HEPR), 245–279 (KKLI…SDHI), 280–317 (PLMK…IHPK), 318–354 (AVSE…KKNI), 356–389 (DIVF…MGTY), and 416–455 (LIAS…PTEG). Disordered regions lie at residues 520 to 541 (KIPS…DQNE), 634 to 692 (QEPI…RHPI), 704 to 728 (KQAN…PENI), 741 to 792 (HVGA…NDAL), and 829 to 899 (KKNA…QAAA). Acidic residues predominate over residues 524–540 (LDDDDEEEEAQEEEDQN). A coiled-coil region spans residues 526-550 (DDDEEEEAQEEEDQNEITHEIVQEC). Over residues 653 to 662 (HQKKHHKHHR) the composition is skewed to basic residues. The segment covering 666–675 (DGDDDEDDET) has biased composition (acidic residues). A coiled-coil region spans residues 814 to 835 (TDIIKEKEREMAMLAKKNAKLS). Over residues 840–849 (PSTANYSEVT) the composition is skewed to polar residues. Composition is skewed to low complexity over residues 854-867 (APAK…AAGS) and 881-899 (KPAA…QAAA). Residues 914–1016 (KTILDDDNFK…FTLLASPSSS (103 aa)) enclose the GAE domain.

Belongs to the adaptor complexes large subunit family. Adaptor protein complex 3 (AP-3) is a heterotetramer composed of two large adaptins (delta-type subunit and beta-type subunit), a medium adaptin (mu-type subunit) and a small adaptin (sigma-type subunit).

The protein localises to the endosome membrane. In terms of biological role, part of the AP-3 complex, an adaptor-related complex which is essential for the compartmentalization of the endocytic pathway. In Dictyostelium discoideum (Social amoeba), this protein is AP-3 complex subunit delta (ap3d1).